The following is a 365-amino-acid chain: Nudix hydrolase 24, chloroplastic (365 aa).

The transit peptide at 1 to 30 (MASAFCSLCPTPTSLFSSHALIPTLQWRSS) directs the protein to the chloroplast. A Nudix hydrolase domain is found at 196 to 337 (GYAIHVNGYV…KDSCSLVIID (142 aa)). A Nudix box motif is present at residues 235–256 (GGLPHGISVCENLVKECEEEAG). The Mg(2+) site is built by E250 and E254.

The protein belongs to the Nudix hydrolase family. The cofactor is Mg(2+). Mn(2+) serves as cofactor. In terms of tissue distribution, expressed in leaves.

It is found in the plastid. The protein resides in the chloroplast. Functionally, probably mediates the hydrolysis of some nucleoside diphosphate derivatives. The chain is Nudix hydrolase 24, chloroplastic (NUDT24) from Arabidopsis thaliana (Mouse-ear cress).